A 35-amino-acid chain; its full sequence is Pheromone-binding protein 1 (35 aa).

Belongs to the PBP/GOBP family. Homodimer. Antenna.

In terms of biological role, this major soluble protein in olfactory sensilla of male moths might serve to solubilize the extremely hydrophobic pheromone molecules and to transport pheromone through the aqueous lymph to receptors located on olfactory cilia. The polypeptide is Pheromone-binding protein 1 (Lymantria dispar (Gypsy moth)).